The primary structure comprises 230 residues: Chalcone--flavanone isomerase (230 aa).

Residues threonine 52, asparagine 117, and serine 194 each coordinate substrate.

The protein belongs to the chalcone isomerase family.

The enzyme catalyses a chalcone = a flavanone.. It participates in secondary metabolite biosynthesis; flavonoid biosynthesis. Its function is as follows. Catalyzes the intramolecular cyclization of bicyclic chalcones into tricyclic (S)-flavanones. Responsible for the isomerization of 4,2',4',6'-tetrahydroxychalcone (also termed chalcone) into naringenin. The protein is Chalcone--flavanone isomerase (CHI) of Camellia sinensis (Tea plant).